Reading from the N-terminus, the 225-residue chain is 7-cyano-7-deazaguanine synthase (225 aa).

ATP is bound at residue 10–20 (FSGGQDSTTLA). Residues Cys190, Cys205, Cys208, and Cys211 each coordinate Zn(2+).

It belongs to the QueC family. Zn(2+) is required as a cofactor.

It carries out the reaction 7-carboxy-7-deazaguanine + NH4(+) + ATP = 7-cyano-7-deazaguanine + ADP + phosphate + H2O + H(+). The protein operates within purine metabolism; 7-cyano-7-deazaguanine biosynthesis. Functionally, catalyzes the ATP-dependent conversion of 7-carboxy-7-deazaguanine (CDG) to 7-cyano-7-deazaguanine (preQ(0)). The protein is 7-cyano-7-deazaguanine synthase of Helicobacter pylori (strain J99 / ATCC 700824) (Campylobacter pylori J99).